A 1630-amino-acid polypeptide reads, in one-letter code: Transient receptor potential cation channel subfamily M member 1 (1630 aa).

Disordered regions lie at residues 1–25 (MGSM…GSQK), 65–92 (PLPS…SVSK), 453–492 (APPV…EVEE), 620–643 (LGME…EEEI), and 824–858 (SKEN…HKKQ). The Cytoplasmic portion of the chain corresponds to 1 to 877 (MGSMRKMSSS…CEFYNAPIVK (877 aa)). The segment covering 8–25 (SSSFKRGSIKSSTSGSQK) has biased composition (low complexity). The segment covering 69-92 (VTPSSTAEDTKQGDAQSGKWSVSK) has biased composition (polar residues). Positions 474-485 (GRGKGKGKKKGK) are enriched in basic residues. Basic and acidic residues-rich tracts occupy residues 825–834 (KENEDGKEKE) and 845–855 (GSRKGDEENEH). Residues 878-898 (FWFYTISYLGYLLLFNYVILV) traverse the membrane as a helical segment. Residues 899 to 944 (RMDGWPSPQEWIVISYIVSLALEKIREILMSEPGKLSQKIKVWLQE) are Extracellular-facing. Residues 945 to 965 (YWNITDLVAISMFMVGAILRL) traverse the membrane as a helical segment. Over 966-975 (QNQPYMGYGR) the chain is Cytoplasmic. The chain crosses the membrane as a helical span at residues 976–996 (VIYCVDIILWYIRVLDIFGVN). The Extracellular segment spans residues 997–1008 (KYLGPYVMMIGK). Residues 1009 to 1029 (MMIDMLYFVVIMLVVLMSFGV) form a helical membrane-spanning segment. Residues 1030–1107 (ARQAILHPEE…CIPGAWLTPA (78 aa)) are Cytoplasmic-facing. A helical membrane pass occupies residues 1108–1128 (LMACYLLVANILLVNLLIAVF). Residue asparagine 1129 is glycosylated (N-linked (GlcNAc...) asparagine). The Extracellular portion of the chain corresponds to 1129-1158 (NNTFFEVKSISNQVWKFQRYQLIMTFHDRP). Residues 1159-1179 (VLPPPMIILSHIYIIVMRLSG) form a helical membrane-spanning segment. At 1180 to 1630 (RCRKKREGDQ…QEKGNPETEC (451 aa)) the chain is on the cytoplasmic side. A coiled-coil region spans residues 1235-1255 (IRVTSERVENMSMRLEEINER). Disordered stretches follow at residues 1362–1414 (EDVK…AGEL) and 1575–1630 (CLRS…ETEC).

This sequence belongs to the transient receptor (TC 1.A.4) family. LTrpC subfamily. TRPM1 sub-subfamily. Interacts with TRPM3; the interaction results in the formation of a heteromultimeric cation channel complex that are functionally different from the homomeric channels. Interacts with GPR179. Associates with both guanine nucleotide-binding proteins G(o) and beta-gamma G protein dimer; implicated in directly regulating TRPM1 channel open-state.

Its subcellular location is the cell membrane. It is found in the endoplasmic reticulum membrane. It localises to the cell projection. The protein resides in the axon. The enzyme catalyses Ca(2+)(in) = Ca(2+)(out). The catalysed reaction is Mg(2+)(in) = Mg(2+)(out). It carries out the reaction Mn(2+)(in) = Mn(2+)(out). It catalyses the reaction Ni(2+)(in) = Ni(2+)(out). Inhibited by extracellular zinc ions. Inhibited by intracellular Mg(2+). Activated by the neuroactive steroid pregnenolone sulfate. Negatively regulated by activation of GRM6 receptors in the ON-bipolar cells. Functionally, constitutively open nonselective divalent cation-conducting channels which mediate the influx of Ca(2+), Mg(2+), Mn(2+), Ba(2+), and Ni(2+) into the cytoplasm, leading to membrane depolarization. Impermeable to zinc ions. In addition, forms heteromultimeric ion channels with TRPM3 which are permeable for calcium and zinc ions. Plays an essential role for the depolarizing photoresponse of retinal ON bipolar cells. In the dark, tonic release of glutamate activates the G-protein coupled receptor for glutamate GRM6, its activation induces the release of G(o) protein and the beta-gamma G protein dimer. Both subunits can interact and inactivate the TRPM1 channel. A light onset, induces decrease in glutamate release and deactivation of GRM6 leading to channel opening and membrane depolarization. May play a role in metastasis suppression. In Rattus norvegicus (Rat), this protein is Transient receptor potential cation channel subfamily M member 1.